The primary structure comprises 494 residues: Smoothelin-like protein 1 (494 aa).

Composition is skewed to basic and acidic residues over residues Met-1–Glu-10, Asp-74–Thr-104, Thr-112–Val-166, and Thr-179–Ala-232. Residues Met-1 to Asn-348 are disordered. A coiled-coil region spans residues Lys-123–Lys-145. Residues Asp-233 to Gln-255 are compositionally biased toward acidic residues. 2 stretches are compositionally biased toward low complexity: residues Pro-269–Pro-279 and Ser-302–Pro-314. Positions Gly-324–Val-335 are enriched in basic and acidic residues. The residue at position 336 (Ser-336) is a Phosphoserine. The 107-residue stretch at Gly-378 to Val-484 folds into the Calponin-homology (CH) domain. Residues Ile-476–Lys-494 form a calmodulin-binding region.

Belongs to the smoothelin family. Interacts with PPP1R12A. Post-translationally, maximal phosphorylation of Ser-336 correlates with maximal relaxation of aorta in response to acetylcholine. Expressed in striated muscles, specifically in type 2a fibers (at protein level).

The protein localises to the cytoplasm. Its subcellular location is the myofibril. The protein resides in the sarcomere. It localises to the i band. It is found in the m line. The protein localises to the nucleus. Its function is as follows. Plays a role in the regulation of contractile properties of both striated and smooth muscles. When unphosphorylated, may inhibit myosin dephosphorylation. Phosphorylation at Ser-299 reduces this inhibitory activity. This is Smoothelin-like protein 1 (SMTNL1) from Homo sapiens (Human).